Here is a 31-residue protein sequence, read N- to C-terminus: Sarcolipin (31 aa).

Residues methionine 1–glutamate 7 are Cytoplasmic-facing. A helical transmembrane segment spans residues leucine 8–valine 26. Residues arginine 27–tyrosine 31 are Lumenal-facing.

This sequence belongs to the sarcolipin family. As to quaternary structure, homooligomer. Can also form heterooligomers with other sarcoplasmic/endoplasmic reticulum calcium ATPase (SERCA) regulators ARLN, ERLN, PLN and STRIT1/DWORF. Monomer. Interacts with calcium ATPase ATP2A1/SERCA1. Interacts as a monomer with ATP2A2/SERCA2; the interaction decreases ATP2A2 Ca(2+) affinity. Interacts with VMP1; VMP1 competes with PLN and SLN to prevent them from forming an inhibitory complex with ATP2A2.

The protein resides in the sarcoplasmic reticulum membrane. Its subcellular location is the endoplasmic reticulum membrane. Functionally, reversibly inhibits the activity of ATP2A1/SERCA1 and ATP2A2/SERCA2 in sarcoplasmic reticulum by decreasing the apparent affinity of the ATPase for Ca(2+). Also inhibits the activity of ATP2A3/SERCA3. Modulates calcium re-uptake during muscle relaxation and plays an important role in calcium homeostasis in muscle. Required for muscle-based, non-shivering thermogenesis. The protein is Sarcolipin of Homo sapiens (Human).